A 306-amino-acid polypeptide reads, in one-letter code: D-alanine--D-alanine ligase (306 aa).

The ATP-grasp domain maps to 107 to 300; that stretch reads KEAYRAAGLP…FGQLCAWMVE (194 aa). 134–184 serves as a coordination point for ATP; the sequence is MQPPYVVKPYNEGSSVGVYIVTEAANGPPVLAPDLPATLMVEEYVPGRELS. Residues D251, E267, and N269 each contribute to the Mg(2+) site.

Belongs to the D-alanine--D-alanine ligase family. Mg(2+) serves as cofactor. Mn(2+) is required as a cofactor.

Its subcellular location is the cytoplasm. It catalyses the reaction 2 D-alanine + ATP = D-alanyl-D-alanine + ADP + phosphate + H(+). It functions in the pathway cell wall biogenesis; peptidoglycan biosynthesis. Functionally, cell wall formation. This is D-alanine--D-alanine ligase from Ruegeria pomeroyi (strain ATCC 700808 / DSM 15171 / DSS-3) (Silicibacter pomeroyi).